Consider the following 309-residue polypeptide: UDP-N-acetylenolpyruvoylglucosamine reductase (309 aa).

Residues 40–204 (LGGKVPLFAI…LQATFKLKKG (165 aa)) enclose the FAD-binding PCMH-type domain. Arginine 182 is a catalytic residue. Serine 233 (proton donor) is an active-site residue. The active site involves glutamate 304.

It belongs to the MurB family. Requires FAD as cofactor.

It is found in the cytoplasm. The enzyme catalyses UDP-N-acetyl-alpha-D-muramate + NADP(+) = UDP-N-acetyl-3-O-(1-carboxyvinyl)-alpha-D-glucosamine + NADPH + H(+). It functions in the pathway cell wall biogenesis; peptidoglycan biosynthesis. Functionally, cell wall formation. The polypeptide is UDP-N-acetylenolpyruvoylglucosamine reductase (Fervidobacterium nodosum (strain ATCC 35602 / DSM 5306 / Rt17-B1)).